A 112-amino-acid polypeptide reads, in one-letter code: Small ribosomal subunit protein bS16 (112 aa).

This sequence belongs to the bacterial ribosomal protein bS16 family.

In Aquifex aeolicus (strain VF5), this protein is Small ribosomal subunit protein bS16.